Reading from the N-terminus, the 431-residue chain is Enolase (431 aa).

(2R)-2-phosphoglycerate is bound at residue glutamine 167. Glutamate 209 serves as the catalytic Proton donor. Residues aspartate 246, glutamate 289, and aspartate 316 each contribute to the Mg(2+) site. Positions 341, 370, 371, and 392 each coordinate (2R)-2-phosphoglycerate. Lysine 341 serves as the catalytic Proton acceptor.

This sequence belongs to the enolase family. As to quaternary structure, component of the RNA degradosome, a multiprotein complex involved in RNA processing and mRNA degradation. Mg(2+) serves as cofactor.

It is found in the cytoplasm. It localises to the secreted. Its subcellular location is the cell surface. It carries out the reaction (2R)-2-phosphoglycerate = phosphoenolpyruvate + H2O. Its pathway is carbohydrate degradation; glycolysis; pyruvate from D-glyceraldehyde 3-phosphate: step 4/5. Functionally, catalyzes the reversible conversion of 2-phosphoglycerate (2-PG) into phosphoenolpyruvate (PEP). It is essential for the degradation of carbohydrates via glycolysis. This chain is Enolase, found in Hahella chejuensis (strain KCTC 2396).